A 362-amino-acid polypeptide reads, in one-letter code: Class I histocompatibility antigen, Gogo-OKO alpha chain (362 aa).

The first 24 residues, 1-24 (MAVVAPRTLLLLLSGTLALTRTWA), serve as a signal peptide directing secretion. Residues 25–114 (GSHSMRYFYT…LRGYYNQSEG (90 aa)) form an alpha-1 region. Residues 25 to 308 (GSHSMRYFYT…EPSSQPTIPI (284 aa)) are Extracellular-facing. N-linked (GlcNAc...) asparagine glycosylation occurs at asparagine 110. Positions 115–206 (GSHTIQRMYG…ENGKETLQRT (92 aa)) are alpha-2. 2 disulfide bridges follow: cysteine 125-cysteine 188 and cysteine 227-cysteine 283. The interval 207–298 (DPPKTHMTHH…GLPKPLTLRW (92 aa)) is alpha-3. One can recognise an Ig-like C1-type domain in the interval 209-295 (PKTHMTHHPV…QHEGLPKPLT (87 aa)). The tract at residues 299–308 (EPSSQPTIPI) is connecting peptide. A helical transmembrane segment spans residues 309 to 332 (VGIIAGLVLLGAVITGAVVAAMMW). Residues 333–362 (RKKSSGRKGGSYSQAASSDSAQGSDVSLTA) lie on the Cytoplasmic side of the membrane. Residues 337-362 (SGRKGGSYSQAASSDSAQGSDVSLTA) are disordered. Over residues 342 to 362 (GSYSQAASSDSAQGSDVSLTA) the composition is skewed to low complexity.

Belongs to the MHC class I family. Heterodimer of an alpha chain and a beta chain (beta-2-microglobulin).

The protein resides in the membrane. Functionally, involved in the presentation of foreign antigens to the immune system. This chain is Class I histocompatibility antigen, Gogo-OKO alpha chain, found in Gorilla gorilla gorilla (Western lowland gorilla).